We begin with the raw amino-acid sequence, 372 residues long: Tribbles homolog 1 (372 aa).

Disordered regions lie at residues 1–26 (MRVGPVRFALSGASQPRGPGLLFPAA) and 49–85 (RLSECSSPPDYLSPPGSPCSPQPPPSTQGTGGSCVSS). Pro residues predominate over residues 59 to 74 (YLSPPGSPCSPQPPPS). A Protein kinase domain is found at 91-338 (IADYLLLPLA…APQILLHPWF (248 aa)). A COP1-binding motif is present at residues 355–360 (DQIVPE).

It belongs to the protein kinase superfamily. CAMK Ser/Thr protein kinase family. Tribbles subfamily. As to quaternary structure, monomer. Interacts (via protein kinase domain) with CEBPA. Interacts with COP1.

Its function is as follows. Adapter protein involved in protein degradation by interacting with COP1 ubiquitin ligase. Promotes CEBPA degradation and inhibits its function. Controls macrophage, eosinophil and neutrophil differentiation via the COP1-binding domain. Regulates myeloid cell differentiation by altering the expression of CEBPA in a COP1-dependent manner. Interacts with MAPK kinases and regulates activation of MAP kinases, but has no kinase activity. In Mus musculus (Mouse), this protein is Tribbles homolog 1.